The following is a 142-amino-acid chain: Large ribosomal subunit protein uL13 (142 aa).

The protein belongs to the universal ribosomal protein uL13 family. In terms of assembly, part of the 50S ribosomal subunit.

Functionally, this protein is one of the early assembly proteins of the 50S ribosomal subunit, although it is not seen to bind rRNA by itself. It is important during the early stages of 50S assembly. This Ralstonia nicotianae (strain ATCC BAA-1114 / GMI1000) (Ralstonia solanacearum) protein is Large ribosomal subunit protein uL13.